Reading from the N-terminus, the 558-residue chain is MAKLLSCVLGPRLYKIYRERDSERAPASVPETPTAVTAPHSSSWDTYYQPRALEKHADSILALASVFWSISYYSSPFAFFYLYRKGYLSLSKVVPFSHYAGTLLLLLAGVACLRGIGRWTNPQYRQFITILEATHRNQSSENKRQLANYNFDFRSWPVDFHWEEPSSRKESRGGPSRRGVALLRPEPLHRGTADTLLNRVKKLPCQITSYLVAHTLGRRMLYPGSVYLLQKALMPVLLQGQARLVEECNGRRAKLLACDGNEIDTMFVDRRGTAQPQGQKLVICCEGNAGFYEVGCISTPLEAGYSVLGWNHPGFAGSTGVPFPQNEANAMDVVVQFAIHRLGFQPQDIIIYAWSIGGFTATWAAMSYPDVSAVILDASFDDLVPLALKVMPDSWRGLVTRTVRQHLNLNNAEQLCRYLGPVLLIRRTKDEIITTTVPEDIMSNRGNDLLLKLLQHRYPRVMAEEGLQVVRQWLEASSQLEEASIYSRWEVEEDWCLSVLRSYQAEHGPDFPWSVGEDMSADGRRQLALFLARKHLHNFEATHCTPLPAQNFQMPWHL.

2 consecutive transmembrane segments (helical) span residues I60 to F80 and V93 to L113. The Cytoplasmic segment spans residues R114–L558. The AB hydrolase-1 domain occupies L281–L407. Catalysis depends on charge relay system residues S355, D430, and H507.

This sequence belongs to the AB hydrolase superfamily. ABHD16 family.

Its subcellular location is the membrane. The catalysed reaction is 1-heptadecanoyl-2-(5Z,8Z,11Z,14Z-eicosatetraenoyl)-sn-glycero-3-phosphoserine + H2O = 1-heptadecanoyl-sn-glycero-3-phosphoserine + (5Z,8Z,11Z,14Z)-eicosatetraenoate + H(+). It carries out the reaction 1-hexadecanoyl-2-(9Z-octadecenoyl)-sn-glycero-3-phospho-L-serine + H2O = 1-hexadecanoyl-sn-glycero-3-phospho-L-serine + (9Z)-octadecenoate + H(+). It catalyses the reaction 1-octadecanoyl-2-(9Z,12Z-octadecadienoyl)-sn-glycero-3-phosphoserine + H2O = 1-octadecanoyl-sn-glycero-3-phosphoserine + (9Z,12Z)-octadecadienoate + H(+). The enzyme catalyses 1-heptadecanoyl-2-(5Z,8Z,11Z,14Z-eicosatetraenoyl)-sn-glycero-3-phosphocholine + H2O = 1-heptadecanoyl-sn-glycero-3-phosphocholine + (5Z,8Z,11Z,14Z)-eicosatetraenoate + H(+). The catalysed reaction is 1-hexadecanoyl-2-(9Z-octadecenoyl)-sn-glycero-3-phosphoglycerol + H2O = 1-hexadecanoyl-sn-glycero-3-phosphoglycerol + (9Z)-octadecenoate + H(+). It carries out the reaction 1-hexadecanoyl-2-(9Z-octadecenoyl)-sn-glycero-3-phospho-(1D-myo-inositol) + H2O = 1-hexadecanoyl-sn-glycero-3-phospho-(1D-myo-inositol) + (9Z)-octadecenoate + H(+). It catalyses the reaction 1-heptadecanoyl-2-(5Z,8Z,11Z,14Z-eicosatetraenoyl)-sn-glycero-3-phosphoethanolamine + H2O = 1-heptadecanoyl-sn-glycero-3-phosphoethanolamine + (5Z,8Z,11Z,14Z)-eicosatetraenoate + H(+). The enzyme catalyses 1-hexadecanoyl-2-(9Z-octadecenoyl)-sn-glycero-3-phospho-(1'-sn-glycerol) + H2O = 1-hexadecanoyl-sn-glycero-3-phospho-(1'-sn-glycerol) + (9Z)-octadecenoate + H(+). The catalysed reaction is Hydrolyzes glycerol monoesters of long-chain fatty acids.. It carries out the reaction 1-tetradecanoylglycerol + H2O = tetradecanoate + glycerol + H(+). It catalyses the reaction 2-hexadecanoylglycerol + H2O = glycerol + hexadecanoate + H(+). The enzyme catalyses 1-(9Z-octadecenoyl)-glycerol + H2O = glycerol + (9Z)-octadecenoate + H(+). The catalysed reaction is 2-(9Z-octadecenoyl)-glycerol + H2O = glycerol + (9Z)-octadecenoate + H(+). It carries out the reaction 2-(9Z,12Z-octadecadienoyl)-glycerol + H2O = (9Z,12Z)-octadecadienoate + glycerol + H(+). It catalyses the reaction 1-(5Z,8Z,11Z,14Z-eicosatetraenoyl)-glycerol + H2O = glycerol + (5Z,8Z,11Z,14Z)-eicosatetraenoate + H(+). The enzyme catalyses 2-(5Z,8Z,11Z,14Z-eicosatetraenoyl)-glycerol + H2O = glycerol + (5Z,8Z,11Z,14Z)-eicosatetraenoate + H(+). The catalysed reaction is prostaglandin D2-1-glycerol ester + H2O = prostaglandin D2 + glycerol + H(+). It carries out the reaction 2-glyceryl-15-deoxy-Delta(12,14)-prostaglandin J2 + H2O = 15-deoxy-Delta(12,14)-prostaglandin J2 + glycerol + H(+). It catalyses the reaction 1-(9Z,12Z-octadecadienoyl)-glycerol + H2O = (9Z,12Z)-octadecadienoate + glycerol + H(+). In terms of biological role, phosphatidylserine (PS) lipase that mediates the hydrolysis of phosphatidylserine to generate lysophosphatidylserine (LPS). LPS constitutes a class of signaling lipids that regulates immunological and neurological processes. Has no activity towards diacylglycerol, triacylglycerol or lysophosphatidylserine lipase. Also has monoacylglycerol lipase activity, with preference for 1-(9Z,12Z-octadecadienoyl)-glycerol (1-LG) and 2-glyceryl-15-deoxy-Delta(12,14)-prostaglandin J2 (15d-PGJ(2)-G). This Macaca fascicularis (Crab-eating macaque) protein is Phosphatidylserine lipase ABHD16A.